Here is a 302-residue protein sequence, read N- to C-terminus: Oxygen-dependent coproporphyrinogen-III oxidase (302 aa).

S94 contributes to the substrate binding site. Residues H98 and H108 each coordinate a divalent metal cation. The active-site Proton donor is the H108. A substrate-binding site is contributed by 110–112 (NVR). Positions 147 and 177 each coordinate a divalent metal cation. The important for dimerization stretch occupies residues 242 to 277 (YVEFNLVYDRGTLFGLQTGGRTESILMSMPPLVRWQ). Position 260–262 (260–262 (GGR)) interacts with substrate.

The protein belongs to the aerobic coproporphyrinogen-III oxidase family. As to quaternary structure, homodimer. A divalent metal cation serves as cofactor.

Its subcellular location is the cytoplasm. It catalyses the reaction coproporphyrinogen III + O2 + 2 H(+) = protoporphyrinogen IX + 2 CO2 + 2 H2O. It functions in the pathway porphyrin-containing compound metabolism; protoporphyrin-IX biosynthesis; protoporphyrinogen-IX from coproporphyrinogen-III (O2 route): step 1/1. Its function is as follows. Involved in the heme biosynthesis. Catalyzes the aerobic oxidative decarboxylation of propionate groups of rings A and B of coproporphyrinogen-III to yield the vinyl groups in protoporphyrinogen-IX. The polypeptide is Oxygen-dependent coproporphyrinogen-III oxidase (Shewanella baltica (strain OS155 / ATCC BAA-1091)).